Reading from the N-terminus, the 584-residue chain is 2-succinyl-5-enolpyruvyl-6-hydroxy-3-cyclohexene-1-carboxylate synthase (584 aa).

This sequence belongs to the TPP enzyme family. MenD subfamily. Homodimer. The cofactor is Mg(2+). It depends on Mn(2+) as a cofactor. Thiamine diphosphate is required as a cofactor.

The catalysed reaction is isochorismate + 2-oxoglutarate + H(+) = 5-enolpyruvoyl-6-hydroxy-2-succinyl-cyclohex-3-ene-1-carboxylate + CO2. The protein operates within quinol/quinone metabolism; 1,4-dihydroxy-2-naphthoate biosynthesis; 1,4-dihydroxy-2-naphthoate from chorismate: step 2/7. It participates in quinol/quinone metabolism; menaquinone biosynthesis. Its function is as follows. Catalyzes the thiamine diphosphate-dependent decarboxylation of 2-oxoglutarate and the subsequent addition of the resulting succinic semialdehyde-thiamine pyrophosphate anion to isochorismate to yield 2-succinyl-5-enolpyruvyl-6-hydroxy-3-cyclohexene-1-carboxylate (SEPHCHC). This Bacillus cereus (strain ATCC 10987 / NRS 248) protein is 2-succinyl-5-enolpyruvyl-6-hydroxy-3-cyclohexene-1-carboxylate synthase.